Here is a 302-residue protein sequence, read N- to C-terminus: UPF0725 protein At1g23960 (302 aa).

Residue Ala2 is modified to N-acetylalanine.

It belongs to the UPF0725 (EMB2204) family.

The protein is UPF0725 protein At1g23960 of Arabidopsis thaliana (Mouse-ear cress).